A 400-amino-acid polypeptide reads, in one-letter code: Putative F-box protein At1g30920 (400 aa).

The F-box domain occupies 4–49; the sequence is EENTDSIPIDLILDILSRLPSKSIARCRCVSKLWESMIRQSYFTEL.

This chain is Putative F-box protein At1g30920, found in Arabidopsis thaliana (Mouse-ear cress).